The primary structure comprises 406 residues: Protrudin (406 aa).

Residues 1-71 are Cytoplasmic-facing; the sequence is MQAAERDGVA…AAEGVRALLR (71 aa). A sufficient for homooligomerization region spans residues 1 to 97; sequence MQAAERDGVA…LLLTLDQAAW (97 aa). A sufficient for localization to endoplasmic reticulum tubular network region spans residues 1-210; the sequence is MQAAERDGVA…LYLLPLCWVM (210 aa). Residues 72–92 form a helical membrane-spanning segment; it reads WQRPLCSLLVCLGLNFLLLTL. Residue Asp-93 is a topological domain, lumenal. Residues 94 to 114 traverse the membrane as a helical segment; that stretch reads QAAWYSVLALLVLLPALLGYL. Topologically, residues 115-192 are cytoplasmic; sequence QETYRVRPSE…NPTVSSQFYG (78 aa). Positions 193 to 213 form an intramembrane region, helical; the sequence is ALLGSVCILYLLPLCWVMAIL. The Cytoplasmic segment spans residues 214 to 406; that stretch reads NSTLFLGNSQ…CAQCNQMLIK (193 aa). The disordered stretch occupies residues 239–295; that stretch reads LGTKPLESAPEPAKPLPTDAPPDRTPTPTSTEDLTPGSVEEAEEAEPDEEFKDAIEE. Residues 250–263 are compositionally biased toward pro residues; that stretch reads PAKPLPTDAPPDRT. Over residues 278–295 the composition is skewed to acidic residues; it reads EEAEEAEPDEEFKDAIEE. The FYVE-type zinc-finger motif lies at 339–405; the sequence is SNNFGTCTGC…VCAQCNQMLI (67 aa). 8 residues coordinate Zn(2+): Cys-345, Cys-348, Cys-361, Cys-364, Cys-369, Cys-372, Cys-397, and Cys-400.

Can form homooligomers (monomers, dimers and tetramers).

It is found in the recycling endosome membrane. Its subcellular location is the endoplasmic reticulum membrane. The protein localises to the cell projection. It localises to the growth cone membrane. Functionally, key regulator of RAB11-dependent vesicular trafficking during neurite extension through polarized membrane transport. Promotes axonal elongation and contributes to the establishment of neuronal cell polarity. Involved in nerve growth factor-induced neurite formation in VAPA-dependent manner. Contributes to both the formation and stabilization of the tubular ER network. Involved in ER morphogenesis by regulating the sheet-to-tubule balance and possibly the density of tubule interconnections. This Gallus gallus (Chicken) protein is Protrudin (ZFYVE27).